Consider the following 108-residue polypeptide: Large ribosomal subunit protein uL22 (108 aa).

It belongs to the universal ribosomal protein uL22 family. In terms of assembly, part of the 50S ribosomal subunit.

In terms of biological role, this protein binds specifically to 23S rRNA; its binding is stimulated by other ribosomal proteins, e.g. L4, L17, and L20. It is important during the early stages of 50S assembly. It makes multiple contacts with different domains of the 23S rRNA in the assembled 50S subunit and ribosome. Its function is as follows. The globular domain of the protein is located near the polypeptide exit tunnel on the outside of the subunit, while an extended beta-hairpin is found that lines the wall of the exit tunnel in the center of the 70S ribosome. The sequence is that of Large ribosomal subunit protein uL22 from Nitratiruptor sp. (strain SB155-2).